The sequence spans 315 residues: Ribose-phosphate pyrophosphokinase (315 aa).

Residues Asp37–Glu39 and Arg96–Gln97 each bind ATP. Positions 131 and 170 each coordinate Mg(2+). Lys194 is an active-site residue. D-ribose 5-phosphate is bound by residues Arg196, Asp220, and Asp224–Thr228.

The protein belongs to the ribose-phosphate pyrophosphokinase family. Class I subfamily. Homohexamer. The cofactor is Mg(2+).

The protein resides in the cytoplasm. It carries out the reaction D-ribose 5-phosphate + ATP = 5-phospho-alpha-D-ribose 1-diphosphate + AMP + H(+). It participates in metabolic intermediate biosynthesis; 5-phospho-alpha-D-ribose 1-diphosphate biosynthesis; 5-phospho-alpha-D-ribose 1-diphosphate from D-ribose 5-phosphate (route I): step 1/1. Involved in the biosynthesis of the central metabolite phospho-alpha-D-ribosyl-1-pyrophosphate (PRPP) via the transfer of pyrophosphoryl group from ATP to 1-hydroxyl of ribose-5-phosphate (Rib-5-P). This is Ribose-phosphate pyrophosphokinase from Yersinia pestis.